The chain runs to 1679 residues: Lysophospholipase NTE1 (1679 aa).

Residues M1 to N20 show a composition bias toward low complexity. Residues M1–S21 are disordered. Residues M1 to Q49 are Cytoplasmic-facing. The chain crosses the membrane as a helical span at residues T50–A70. Residues S71–T103 lie on the Lumenal side of the membrane. Residues L104–M124 traverse the membrane as a helical segment. The Cytoplasmic segment spans residues K125–I1679. Basic and acidic residues predominate over residues S261–T274. The tract at residues S261 to N304 is disordered. Residues D275 to N295 show a composition bias toward acidic residues. Phosphoserine is present on residues S300 and S312. Disordered stretches follow at residues S498–D527 and D586–R672. Polar residues-rich tracts occupy residues P592–T606 and F630–T652. Phosphoserine is present on residues S632, S634, S653, S661, S670, S680, and S739. The interval K775–E800 is disordered. Residues K788 to E800 show a composition bias toward basic and acidic residues. Phosphothreonine is present on T803. Residues T803–L947 and S943–K1074 contribute to the a nucleoside 3',5'-cyclic phosphate site. A disordered region spans residues S855–T882. Polar residues predominate over residues M862–S873. The region spanning L1373–R1537 is the PNPLA domain. The GXGXXG motif lies at G1377–G1382. The short motif at G1404–G1408 is the GXSXG element. The Nucleophile role is filled by S1406. D1524 serves as the catalytic Proton acceptor. Residues D1524–G1526 carry the DGA/G motif.

The protein belongs to the NTE family.

It is found in the endoplasmic reticulum membrane. The protein localises to the lipid droplet. The enzyme catalyses a 1-acyl-sn-glycero-3-phosphocholine + H2O = sn-glycerol 3-phosphocholine + a fatty acid + H(+). It catalyses the reaction a 1,2-diacyl-sn-glycero-3-phosphocholine + 2 H2O = sn-glycerol 3-phosphocholine + 2 a carboxylate + 2 H(+). Positively regulated by SEC14. Inhibited by organophosphorus esters in the order phenyl saligenin phosphate (PSP) &gt; phenyldipentyl phosphinate (PDPP) = diisopropyl fluorophosphate (DFP) &gt; and paraoxon (PXN). Its function is as follows. Intracellular phospholipase B that catalyzes the double deacylation of phosphatidylcholine (PC) to glycerophosphocholine (GroPCho). Plays an important role in membrane lipid homeostasis. Responsible for the rapid PC turnover in response to inositol, elevated temperatures, or when choline is present in the growth medium. NTE1 activity impacts the repressing transcriptional activity of OPI1, the main regulator of phospholipid synthesis gene transcription. The protein is Lysophospholipase NTE1 (NTE1) of Saccharomyces cerevisiae (strain ATCC 204508 / S288c) (Baker's yeast).